We begin with the raw amino-acid sequence, 159 residues long: MGFTEKQEGLVKESWEVLKQDIPHSSLRFFSLILEIAPGAKNMFSFLRESEEIPQNNPKLKAHAVKVFKMTCESAIQLREKGEVVVADTTLKYLGTVHVKSGVKDPHFEVVKEALLRTIEEAIGEEKWNEEMKNAWGEAYDQLAEAIKAEMKNHHDETA.

A Globin domain is found at 2-152 (GFTEKQEGLV…LAEAIKAEMK (151 aa)). Positions 35–39 (EIAPG) match the Homodimerization motif. 4 residues coordinate heme b: Ser-45, Lys-59, His-63, and His-98. The Homodimerization signature appears at 105–117 (DPHFEVVKEALLR).

Belongs to the plant globin family. In terms of assembly, homodimer. Heme b serves as cofactor.

It is found in the cytoplasm. The protein resides in the nucleus. It carries out the reaction Fe(III)-heme b-[protein] + nitric oxide + H2O = Fe(II)-heme b-[protein] + nitrite + 2 H(+). Phytoglobin that reduces nitrite to nitric oxide (NO) under anoxic conditions (e.g. during flooding or in waterlogged soil). May not function as an oxygen storage or transport protein. Has an unusually high affinity for O(2) through an hexacoordinate heme iron because of a very low dissociation constant. The chain is Anaerobic nitrite reductase HB2 from Gossypium hirsutum (Upland cotton).